A 100-amino-acid chain; its full sequence is Small ribosomal subunit protein uS14c (100 aa).

It belongs to the universal ribosomal protein uS14 family. As to quaternary structure, part of the 30S ribosomal subunit.

The protein resides in the plastid. It localises to the chloroplast. Functionally, binds 16S rRNA, required for the assembly of 30S particles. This chain is Small ribosomal subunit protein uS14c, found in Cycas taitungensis (Prince sago).